A 97-amino-acid polypeptide reads, in one-letter code: Coiled-coil domain-containing protein 167 (97 aa).

The stretch at 36–80 (LRKMELTEEGRKSLEKEKSSLSSRLSNYERELKSLRHENRKNMLL) forms a coiled coil. A helical membrane pass occupies residues 78 to 95 (MLLSVAIFLLFAVGYYCW).

The protein localises to the membrane. This Xenopus tropicalis (Western clawed frog) protein is Coiled-coil domain-containing protein 167 (ccdc167).